We begin with the raw amino-acid sequence, 459 residues long: Ribulose bisphosphate carboxylase (459 aa).

A substrate-binding site is contributed by asparagine 111. The Proton acceptor role is filled by lysine 166. Lysine 168 is a substrate binding site. Mg(2+) contacts are provided by lysine 191, aspartate 193, and glutamate 194. Lysine 191 is subject to N6-carboxylysine. Histidine 287 functions as the Proton acceptor in the catalytic mechanism. The substrate site is built by arginine 288, histidine 321, and serine 368.

The protein belongs to the RuBisCO large chain family. Type II subfamily. In terms of assembly, the complex is approximately 350 kDa when isolated from either T.denitrificans or R.sphaeroides, suggesting a homohexamer or homooctamer structure. It depends on Mg(2+) as a cofactor.

The enzyme catalyses 2 (2R)-3-phosphoglycerate + 2 H(+) = D-ribulose 1,5-bisphosphate + CO2 + H2O. The catalysed reaction is D-ribulose 1,5-bisphosphate + O2 = 2-phosphoglycolate + (2R)-3-phosphoglycerate + 2 H(+). Its function is as follows. RuBisCO catalyzes two reactions: the carboxylation of D-ribulose 1,5-bisphosphate, the primary event in carbon dioxide fixation, as well as the oxidative fragmentation of the pentose substrate. Both reactions occur simultaneously and in competition at the same active site. The chain is Ribulose bisphosphate carboxylase (cbbM) from Thiobacillus denitrificans (strain ATCC 25259 / T1).